Reading from the N-terminus, the 351-residue chain is Holliday junction branch migration complex subunit RuvB (351 aa).

The interval Asp4–Tyr199 is large ATPase domain (RuvB-L). ATP contacts are provided by residues Leu38, Arg39, Gly80, Lys83, Thr84, Thr85, Glu146–Tyr148, Arg189, Tyr199, and Arg236. Thr84 contacts Mg(2+). The segment at Thr200–Arg270 is small ATPAse domain (RuvB-S). Residues Asn273–Leu351 are head domain (RuvB-H). DNA is bound by residues Arg328 and Arg333.

It belongs to the RuvB family. Homohexamer. Forms an RuvA(8)-RuvB(12)-Holliday junction (HJ) complex. HJ DNA is sandwiched between 2 RuvA tetramers; dsDNA enters through RuvA and exits via RuvB. An RuvB hexamer assembles on each DNA strand where it exits the tetramer. Each RuvB hexamer is contacted by two RuvA subunits (via domain III) on 2 adjacent RuvB subunits; this complex drives branch migration. In the full resolvosome a probable DNA-RuvA(4)-RuvB(12)-RuvC(2) complex forms which resolves the HJ.

The protein localises to the cytoplasm. The catalysed reaction is ATP + H2O = ADP + phosphate + H(+). Functionally, the RuvA-RuvB-RuvC complex processes Holliday junction (HJ) DNA during genetic recombination and DNA repair, while the RuvA-RuvB complex plays an important role in the rescue of blocked DNA replication forks via replication fork reversal (RFR). RuvA specifically binds to HJ cruciform DNA, conferring on it an open structure. The RuvB hexamer acts as an ATP-dependent pump, pulling dsDNA into and through the RuvAB complex. RuvB forms 2 homohexamers on either side of HJ DNA bound by 1 or 2 RuvA tetramers; 4 subunits per hexamer contact DNA at a time. Coordinated motions by a converter formed by DNA-disengaged RuvB subunits stimulates ATP hydrolysis and nucleotide exchange. Immobilization of the converter enables RuvB to convert the ATP-contained energy into a lever motion, pulling 2 nucleotides of DNA out of the RuvA tetramer per ATP hydrolyzed, thus driving DNA branch migration. The RuvB motors rotate together with the DNA substrate, which together with the progressing nucleotide cycle form the mechanistic basis for DNA recombination by continuous HJ branch migration. Branch migration allows RuvC to scan DNA until it finds its consensus sequence, where it cleaves and resolves cruciform DNA. The sequence is that of Holliday junction branch migration complex subunit RuvB from Leuconostoc mesenteroides subsp. mesenteroides (strain ATCC 8293 / DSM 20343 / BCRC 11652 / CCM 1803 / JCM 6124 / NCDO 523 / NBRC 100496 / NCIMB 8023 / NCTC 12954 / NRRL B-1118 / 37Y).